We begin with the raw amino-acid sequence, 426 residues long: Serine hydroxymethyltransferase (426 aa).

Residues leucine 111 and 115 to 117 each bind (6S)-5,6,7,8-tetrahydrofolate; that span reads GHL. The residue at position 220 (lysine 220) is an N6-(pyridoxal phosphate)lysine.

It belongs to the SHMT family. In terms of assembly, homodimer. Pyridoxal 5'-phosphate is required as a cofactor.

The protein localises to the cytoplasm. It carries out the reaction (6R)-5,10-methylene-5,6,7,8-tetrahydrofolate + glycine + H2O = (6S)-5,6,7,8-tetrahydrofolate + L-serine. It participates in one-carbon metabolism; tetrahydrofolate interconversion. The protein operates within amino-acid biosynthesis; glycine biosynthesis; glycine from L-serine: step 1/1. Functionally, catalyzes the reversible interconversion of serine and glycine with tetrahydrofolate (THF) serving as the one-carbon carrier. This reaction serves as the major source of one-carbon groups required for the biosynthesis of purines, thymidylate, methionine, and other important biomolecules. Also exhibits THF-independent aldolase activity toward beta-hydroxyamino acids, producing glycine and aldehydes, via a retro-aldol mechanism. This is Serine hydroxymethyltransferase from Orientia tsutsugamushi (strain Ikeda) (Rickettsia tsutsugamushi).